A 466-amino-acid polypeptide reads, in one-letter code: MSTRSVSSSSYRRMFGGSGTSSRPSSNRSYVTTSTRTYSLGSALRPSTSRSLYSSSPGGAYVTRSSAVRLRSSMPGVRLLQDSVDFSLADAINTEFKNTRTNEKVELQELNDRFANYIDKVRFLEQQNKILLAELEQLKGQGKSRLGDLYEEEMRELRRQVDQLTNDKARVEVERDNLAEDIMRLREKLQEEMLQREEAESTLQSFRQDVDNASLARLDLERKVESLQEEIAFLKKLHDEEIQELQAQIQEQHVQIDVDVSKPDLTAALRDVRQQYESVAAKNLQEAEEWYKSKFADLSEAANRNNDALRQAKQESNEYRRQVQSLTCEVDALKGTNESLERQMREMEENFALEAANYQDTIGRLQDEIQNMKEEMARHLREYQDLLNVKMALDIEIATYRKLLEGEESRISLPLPNFSSLNLRETNLESLPLVDTHSKRTLLIKTVETRDGQVINETSQHHDDLE.

Low complexity-rich tracts occupy residues 1–13 and 20–33; these read MSTR…SYRR and TSSR…YVTT. Positions 1-33 are disordered; sequence MSTRSVSSSSYRRMFGGSGTSSRPSSNRSYVTT. Ser-2 is subject to N-acetylserine. The tract at residues 2 to 95 is head; sequence STRSVSSSSY…FSLADAINTE (94 aa). Residue Ser-5 is modified to Phosphoserine. A Phosphoserine; by PKA and PKC; alternate modification is found at Ser-7. The O-linked (GlcNAc) serine; alternate glycan is linked to Ser-7. Ser-8 carries the post-translational modification Phosphoserine. A phosphoserine; by PKC mark is found at Ser-9 and Ser-10. Phosphothreonine is present on Thr-20. Ser-25 and Ser-26 each carry phosphoserine. An O-linked (GlcNAc) threonine glycan is attached at Thr-33. A glycan (O-linked (GlcNAc) serine; alternate) is linked at Ser-34. At Ser-34 the chain carries Phosphoserine; by PKC; alternate. Ser-39 is modified (phosphoserine; by CaMK2, PKA, PKC and ROCK2). The residue at position 42 (Ser-42) is a Phosphoserine; by PKC. Position 47 is a phosphoserine; by PKA (Ser-47). Phosphoserine occurs at positions 49 and 51. Tyr-53 is modified (phosphotyrosine). Residues Ser-55 and Ser-56 each carry the phosphoserine modification. Tyr-61 is subject to Phosphotyrosine. Phosphoserine; by PKA and PKC is present on Ser-66. Ser-72 is modified (phosphoserine; by AURKB and ROCK2). Phosphoserine is present on residues Ser-73, Ser-83, and Ser-87. Positions 96-131 are coil 1A; the sequence is FKNTRTNEKVELQELNDRFANYIDKVRFLEQQNKIL. Residues 96–131 are a coiled coil; sequence FKNTRTNEKVELQELNDRFANYIDKVRFLEQQNKIL. An IF rod domain is found at 103–411; the sequence is EKVELQELND…KLLEGEESRI (309 aa). Lys-104 participates in a covalent cross-link: Glycyl lysine isopeptide (Lys-Gly) (interchain with G-Cter in SUMO2). Residue Tyr-117 is modified to Phosphotyrosine. Residues Lys-120, Lys-129, and Lys-139 each carry the N6-acetyllysine; alternate modification. Residues Lys-120 and Lys-129 each carry the N6-succinyllysine; alternate modification. Residues Lys-120, Lys-129, and Lys-139 each participate in a glycyl lysine isopeptide (Lys-Gly) (interchain with G-Cter in SUMO2); alternate cross-link. The segment at 132-153 is linker 1; the sequence is LAELEQLKGQGKSRLGDLYEEE. Position 144 is a phosphoserine (Ser-144). A coiled-coil region spans residues 154–245; it reads MRELRRQVDQ…KLHDEEIQEL (92 aa). A coil 1B region spans residues 154-245; sequence MRELRRQVDQ…KLHDEEIQEL (92 aa). An N6-acetyllysine modification is found at Lys-168. At Lys-188 the chain carries N6-acetyllysine; alternate. The residue at position 188 (Lys-188) is an N6-succinyllysine; alternate. At Ser-214 the chain carries Phosphoserine. An N6-acetyllysine; alternate modification is found at Lys-223. A Glycyl lysine isopeptide (Lys-Gly) (interchain with G-Cter in SUMO2); alternate cross-link involves residue Lys-223. Ser-226 carries the post-translational modification Phosphoserine. An N6-acetyllysine modification is found at Lys-235. Residues 246-268 are linker 12; it reads QAQIQEQHVQIDVDVSKPDLTAA. Residue Lys-262 forms a Glycyl lysine isopeptide (Lys-Gly) (interchain with G-Cter in SUMO2) linkage. The segment at 269–407 is coil 2; sequence LRDVRQQYES…ATYRKLLEGE (139 aa). Lys-294 is subject to N6-acetyllysine; alternate. Position 294 is an N6-succinyllysine; alternate (Lys-294). Residue Lys-294 forms a Glycyl lysine isopeptide (Lys-Gly) (interchain with G-Cter in SUMO2); alternate linkage. A Phosphoserine modification is found at Ser-299. A coiled-coil region spans residues 303–407; sequence NRNNDALRQA…ATYRKLLEGE (105 aa). Lys-313 participates in a covalent cross-link: Glycyl lysine isopeptide (Lys-Gly) (interchain with G-Cter in SUMO2). At Ser-325 the chain carries Phosphoserine. A [IL]-x-C-x-x-[DE] motif motif is present at residues 326-329; that stretch reads LTCE. Position 373 is an N6-acetyllysine; alternate (Lys-373). Lys-373 participates in a covalent cross-link: Glycyl lysine isopeptide (Lys-Gly) (interchain with G-Cter in SUMO2); alternate. Positions 408 to 466 are tail; the sequence is ESRISLPLPNFSSLNLRETNLESLPLVDTHSKRTLLIKTVETRDGQVINETSQHHDDLE. A phosphoserine mark is found at Ser-409, Ser-412, Ser-419, and Ser-420. The residue at position 426 (Thr-426) is a Phosphothreonine. Ser-430 is modified (phosphoserine). A Phosphothreonine modification is found at Thr-436. Ser-438 carries the phosphoserine modification. A Glycyl lysine isopeptide (Lys-Gly) (interchain with G-Cter in SUMO2) cross-link involves residue Lys-439. The residue at position 445 (Lys-445) is an N6-acetyllysine; alternate. Position 445 is an N6-succinyllysine; alternate (Lys-445). Lys-445 participates in a covalent cross-link: Glycyl lysine isopeptide (Lys-Gly) (interchain with G-Cter in SUMO2); alternate. A Glycyl lysine isopeptide (Lys-Gly) (interchain with G-Cter in SUMO1); alternate cross-link involves residue Lys-445. A phosphothreonine mark is found at Thr-446 and Thr-458. Ser-459 is modified (phosphoserine).

The protein belongs to the intermediate filament family. As to quaternary structure, homomer assembled from elementary dimers. Identified in complexes that contain VIM, EZR, AHNAK, BFSP1, BFSP2, ANK2, PLEC, PRX and spectrin. Interacts with BCAS3. Interacts with LGSN. Interacts with SYNM. Interacts (via rod region) with PLEC (via CH 1 domain). Interacts with STK33. Interacts with LARP6. Interacts with RAB8B. Interacts with TOR1A; the interaction associates TOR1A with the cytoskeleton. Interacts with TOR1AIP1. Interacts with TOR1AIP1. Interacts with DIAPH1. Interacts with EPPK1; interaction is dependent of higher-order structure of intermediate filament. Interacts with the non-receptor tyrosine kinase SRMS; the interaction leads to phosphorylation of VIM. Interacts with NOD2. Interacts (via head region) with CORO1C. Interacts with HDGF. Interacts with PRKCE (via phorbol-ester/DAG-type 2 domain). Interacts with BFSP2. Interacts with PPL. Interacts with PKP1 and PKP2. Interacts with SCRIB (via PDZ domains); the interaction protects SCRIB from proteasomal degradation and facilitates SCRIB localization to intermediate filaments, the interaction is reduced by cell contact inhibition. In terms of processing, one of the most prominent phosphoproteins in various cells of mesenchymal origin. Phosphorylation is enhanced during cell division, at which time vimentin filaments are significantly reorganized. Phosphorylation by PKN1 inhibits the formation of filaments. Filament disassembly during mitosis is promoted by phosphorylation at Ser-55 as well as by nestin. Phosphorylated at Ser-56 by CDK5 during neutrophil secretion in the cytoplasm. Phosphorylated by STK33. Phosphorylated on tyrosine residues by SRMS. Post-translationally, S-nitrosylation is induced by interferon-gamma and oxidatively-modified low-densitity lipoprotein (LDL(ox)) possibly implicating the iNOS-S100A8/9 transnitrosylase complex.

The protein resides in the cytoplasm. Its subcellular location is the cytoskeleton. The protein localises to the nucleus matrix. It localises to the cell membrane. In terms of biological role, vimentins are class-III intermediate filaments found in various non-epithelial cells, especially mesenchymal cells. Vimentin is attached to the nucleus, endoplasmic reticulum, and mitochondria, either laterally or terminally. Plays a role in cell directional movement, orientation, cell sheet organization and Golgi complex polarization at the cell migration front. Protects SCRIB from proteasomal degradation and facilitates its localization to intermediate filaments in a cell contact-mediated manner. Its function is as follows. Involved with LARP6 in the stabilization of type I collagen mRNAs for CO1A1 and CO1A2. The chain is Vimentin from Rattus norvegicus (Rat).